A 1079-amino-acid chain; its full sequence is DNA-directed RNA polymerase subunit beta (1079 aa).

The interval 963 to 982 (RSTGPYSRVTQQPVKGRARR) is disordered. Residues 966-975 (GPYSRVTQQP) are compositionally biased toward polar residues.

This sequence belongs to the RNA polymerase beta chain family. In plastids the minimal PEP RNA polymerase catalytic core is composed of four subunits: alpha, beta, beta', and beta''. When a (nuclear-encoded) sigma factor is associated with the core the holoenzyme is formed, which can initiate transcription.

It is found in the plastid. The protein localises to the chloroplast. It carries out the reaction RNA(n) + a ribonucleoside 5'-triphosphate = RNA(n+1) + diphosphate. Its function is as follows. DNA-dependent RNA polymerase catalyzes the transcription of DNA into RNA using the four ribonucleoside triphosphates as substrates. The protein is DNA-directed RNA polymerase subunit beta of Pelargonium hortorum (Common geranium).